A 212-amino-acid polypeptide reads, in one-letter code: Adenylate kinase (212 aa).

Position 10-15 (10-15 (GAGKGT)) interacts with ATP. Residues 30 to 59 (STGDMFRAAMANQTEMGRLAKSYIDKGELV) are NMP. AMP contacts are provided by residues Thr-31, Arg-36, 57-59 (ELV), 86-89 (GYPR), and Gln-93. The tract at residues 127–159 (GRIINRKTGETFHKVFNPPVDYKEEDYYQREDD) is LID. Residues Arg-128 and 137–138 (TF) each bind ATP. Residues Arg-156 and Arg-167 each coordinate AMP. Residue Gln-195 coordinates ATP.

Belongs to the adenylate kinase family. As to quaternary structure, monomer.

It is found in the cytoplasm. It carries out the reaction AMP + ATP = 2 ADP. It participates in purine metabolism; AMP biosynthesis via salvage pathway; AMP from ADP: step 1/1. In terms of biological role, catalyzes the reversible transfer of the terminal phosphate group between ATP and AMP. Plays an important role in cellular energy homeostasis and in adenine nucleotide metabolism. This is Adenylate kinase from Streptococcus pyogenes serotype M5 (strain Manfredo).